The following is a 950-amino-acid chain: UPF0182 protein P9303_14611 (950 aa).

Transmembrane regions (helical) follow at residues 20-40 (LLLSIAAFWLLMRVQVEWLWF), 53-73 (WLWQLGGLLLALLVVATCQLW), 102-122 (LLGCFVVVVGDLVLLTRLAWL), 141-161 (IWALVIPLSCVFISICVMLGN), 173-193 (CFCFSISIARGWGLWSLALAI), 209-229 (FGLGQFPALAFALVVLLAQLV), 259-279 (CDVMRPLIGIILLTLSALLWL), 308-328 (SLASLAILVLAFLVIPFPWIQ), and 335-355 (LIASIIGVGAILLEVLLAPFV).

The protein belongs to the UPF0182 family.

Its subcellular location is the cell membrane. This chain is UPF0182 protein P9303_14611, found in Prochlorococcus marinus (strain MIT 9303).